Here is a 333-residue protein sequence, read N- to C-terminus: Phosphate acyltransferase (333 aa).

It belongs to the PlsX family. In terms of assembly, homodimer. Probably interacts with PlsY.

The protein localises to the cytoplasm. It carries out the reaction a fatty acyl-[ACP] + phosphate = an acyl phosphate + holo-[ACP]. It participates in lipid metabolism; phospholipid metabolism. Catalyzes the reversible formation of acyl-phosphate (acyl-PO(4)) from acyl-[acyl-carrier-protein] (acyl-ACP). This enzyme utilizes acyl-ACP as fatty acyl donor, but not acyl-CoA. The sequence is that of Phosphate acyltransferase from Lactobacillus johnsonii (strain CNCM I-12250 / La1 / NCC 533).